The sequence spans 367 residues: Probable alcohol dehydrogenase adh (367 aa).

Residues Cys-43, His-64, Cys-97, Cys-100, Cys-103, Cys-111, and Asn-163 each contribute to the Zn(2+) site.

This sequence belongs to the zinc-containing alcohol dehydrogenase family. Zn(2+) is required as a cofactor.

It carries out the reaction a primary alcohol + NAD(+) = an aldehyde + NADH + H(+). It catalyses the reaction a secondary alcohol + NAD(+) = a ketone + NADH + H(+). The polypeptide is Probable alcohol dehydrogenase adh (adh) (Mycobacterium tuberculosis (strain CDC 1551 / Oshkosh)).